The chain runs to 875 residues: DNA gyrase subunit A (875 aa).

The Topo IIA-type catalytic domain maps to 34-533; the sequence is LPDVRDGLKP…NSADINLEDL (500 aa). Residue Y122 is the O-(5'-phospho-DNA)-tyrosine intermediate of the active site. A GyrA-box motif is present at residues 560 to 566; the sequence is QRRGGKG. A disordered region spans residues 841-875; that stretch reads EPVDEEDLDTIDGSAAEGDDEIAPEVDVDDEPEEE. Over residues 857–875 the composition is skewed to acidic residues; it reads EGDDEIAPEVDVDDEPEEE.

This sequence belongs to the type II topoisomerase GyrA/ParC subunit family. As to quaternary structure, heterotetramer, composed of two GyrA and two GyrB chains. In the heterotetramer, GyrA contains the active site tyrosine that forms a transient covalent intermediate with DNA, while GyrB binds cofactors and catalyzes ATP hydrolysis.

It is found in the cytoplasm. The catalysed reaction is ATP-dependent breakage, passage and rejoining of double-stranded DNA.. In terms of biological role, a type II topoisomerase that negatively supercoils closed circular double-stranded (ds) DNA in an ATP-dependent manner to modulate DNA topology and maintain chromosomes in an underwound state. Negative supercoiling favors strand separation, and DNA replication, transcription, recombination and repair, all of which involve strand separation. Also able to catalyze the interconversion of other topological isomers of dsDNA rings, including catenanes and knotted rings. Type II topoisomerases break and join 2 DNA strands simultaneously in an ATP-dependent manner. This chain is DNA gyrase subunit A, found in Shigella flexneri.